Consider the following 263-residue polypeptide: uncharacterized protein (263 aa).

The region spanning 107 to 246 is the DOD-type homing endonuclease domain; it reads ILGVLNGDGS…CCSFLEKLGI (140 aa).

This is an uncharacterized protein from Methanocaldococcus jannaschii (strain ATCC 43067 / DSM 2661 / JAL-1 / JCM 10045 / NBRC 100440) (Methanococcus jannaschii).